The primary structure comprises 206 residues: Large ribosomal subunit protein uL4 (206 aa).

The interval 63-97 (MYKQKGTGRARHHSARAPQFRGGGKAHGPVVRSHE) is disordered. A compositionally biased stretch (basic residues) spans 64–77 (YKQKGTGRARHHSA).

This sequence belongs to the universal ribosomal protein uL4 family. Part of the 50S ribosomal subunit.

In terms of biological role, one of the primary rRNA binding proteins, this protein initially binds near the 5'-end of the 23S rRNA. It is important during the early stages of 50S assembly. It makes multiple contacts with different domains of the 23S rRNA in the assembled 50S subunit and ribosome. Forms part of the polypeptide exit tunnel. The protein is Large ribosomal subunit protein uL4 of Rhizobium rhizogenes (strain K84 / ATCC BAA-868) (Agrobacterium radiobacter).